The following is a 536-amino-acid chain: Phosphoenolpyruvate carboxykinase (ATP) (536 aa).

The substrate site is built by Arg61, Tyr195, and Lys201. ATP-binding positions include Lys201, His220, and Gly236–Thr244. Residues Lys201 and His220 each coordinate Mn(2+). Asp257 contributes to the Mn(2+) binding site. 3 residues coordinate ATP: Glu285, Arg322, and Thr447. Arg322 lines the substrate pocket.

It belongs to the phosphoenolpyruvate carboxykinase (ATP) family. It depends on Mn(2+) as a cofactor.

Its subcellular location is the cytoplasm. It carries out the reaction oxaloacetate + ATP = phosphoenolpyruvate + ADP + CO2. It functions in the pathway carbohydrate biosynthesis; gluconeogenesis. Involved in the gluconeogenesis. Catalyzes the conversion of oxaloacetate (OAA) to phosphoenolpyruvate (PEP) through direct phosphoryl transfer between the nucleoside triphosphate and OAA. The chain is Phosphoenolpyruvate carboxykinase (ATP) from Rhizobium rhizogenes (strain K84 / ATCC BAA-868) (Agrobacterium radiobacter).